The chain runs to 415 residues: Ribulose bisphosphate carboxylase/oxygenase activase (415 aa).

Gly37–Thr44 is an ATP binding site.

Belongs to the RuBisCO activase family.

Activation of RuBisCO (ribulose-1,5-bisohosphate carboxylase/oxygenase; EC 4.1.1.39) involves the ATP-dependent carboxylation of the epsilon-amino group of lysine leading to a carbamate structure. The protein is Ribulose bisphosphate carboxylase/oxygenase activase (rca) of Anabaena sp. (strain CA / ATCC 33047).